The sequence spans 387 residues: 3-ketoacyl-CoA thiolase (387 aa).

Cysteine 91 functions as the Acyl-thioester intermediate in the catalytic mechanism. Residues histidine 343 and cysteine 373 each act as proton acceptor in the active site.

This sequence belongs to the thiolase-like superfamily. Thiolase family. Heterotetramer of two alpha chains (FadB) and two beta chains (FadA).

Its subcellular location is the cytoplasm. The catalysed reaction is an acyl-CoA + acetyl-CoA = a 3-oxoacyl-CoA + CoA. The protein operates within lipid metabolism; fatty acid beta-oxidation. In terms of biological role, catalyzes the final step of fatty acid oxidation in which acetyl-CoA is released and the CoA ester of a fatty acid two carbons shorter is formed. The chain is 3-ketoacyl-CoA thiolase from Idiomarina loihiensis (strain ATCC BAA-735 / DSM 15497 / L2-TR).